The chain runs to 83 residues: UPF0297 protein LCK_00468 (83 aa).

It belongs to the UPF0297 family.

The polypeptide is UPF0297 protein LCK_00468 (Leuconostoc citreum (strain KM20)).